The primary structure comprises 282 residues: MELKQISSNKCFGGLQKVFEHSSVELKCKMKFAIYLPPQAESAKCPALYWLSGLTCTEQNFISKSGCQQAASEHGLVVIAPDTSPRGCNIKGEDDSWDFGTGAGFFVNATEDPWNTNYRMYSYVTEELPQLINANFPVDPQRISIFGHSMGGHGALICALKNPGKYRSVSAFAPICNPVLCPWGKKAFNGYLGPDQSKWKAYDATCLVKSYSGPQIDILIDQGKDDEFLSNGQLLPDNFIAACTEKKIPVVFRLQEGYDHSYYFIATFITDHIRHHAKYLNA.

Lys4 bears the N6-succinyllysine mark. The Charge relay system role is filled by Ser149. The residue at position 200 (Lys200) is an N6-acetyllysine. Active-site charge relay system residues include Asp226 and His260.

Belongs to the esterase D family. As to quaternary structure, homodimer.

The protein resides in the cytoplasm. Its subcellular location is the cytoplasmic vesicle. It carries out the reaction S-formylglutathione + H2O = formate + glutathione + H(+). Serine hydrolase involved in the detoxification of formaldehyde. The polypeptide is S-formylglutathione hydrolase (Esd) (Rattus norvegicus (Rat)).